The primary structure comprises 278 residues: UPF0761 membrane protein CBU_1578 (278 aa).

Helical transmembrane passes span 38-58 (LLALVPLTIVAFTLLSFVPAF), 68-88 (LIWENFVPTSAGMVAAYLSQL), 92-112 (VTGLSIINIFFLGIVALLLMY), 134-154 (FLIYFMVLLLSPFLLGAVMLL), 177-197 (LLFVLPYVLIFITFTLFNWVL), 207-227 (AVIGGLVTTVLFELAKFAFTV), and 244-264 (VIPIFLVWLYVSWTIILLGAV).

It belongs to the UPF0761 family.

It is found in the cell inner membrane. The sequence is that of UPF0761 membrane protein CBU_1578 from Coxiella burnetii (strain RSA 493 / Nine Mile phase I).